Reading from the N-terminus, the 245-residue chain is Anti-Pycsar protein Apyc1 (245 aa).

Positions 19–219 (FNNNALLYAG…EIQSQILLKH (201 aa)) are beta-lactamase-like. Zn(2+)-binding residues include histidine 61, histidine 63, aspartate 65, histidine 66, histidine 145, aspartate 165, and histidine 219.

This sequence belongs to the anti-Pycsar protein Apyc1 family. Homodimer. It depends on Zn(2+) as a cofactor.

The enzyme catalyses 3',5'-cyclic CMP + H2O = CMP + H(+). The catalysed reaction is 3',5'-cyclic UMP + H2O = UMP + H(+). Functionally, counteracts the endogenous Pycsar antiviral defense system. Phosphodiesterase that enables metal-dependent hydrolysis of host cyclic nucleotide Pycsar defense signals such as cCMP and cUMP. The protein is Anti-Pycsar protein Apyc1 of Paenibacillus sp. (strain J14).